Consider the following 37-residue polypeptide: Large ribosomal subunit protein bL36 (37 aa).

This sequence belongs to the bacterial ribosomal protein bL36 family.

The chain is Large ribosomal subunit protein bL36 from Photobacterium profundum (strain SS9).